We begin with the raw amino-acid sequence, 787 residues long: Endonuclease MutS2 (787 aa).

335–342 (GPNTGGKT) contacts ATP. A Smr domain is found at 712–787 (LDLRGERYED…GLGNTVIELK (76 aa)).

Belongs to the DNA mismatch repair MutS family. MutS2 subfamily. Homodimer. Binds to stalled ribosomes, contacting rRNA.

In terms of biological role, endonuclease that is involved in the suppression of homologous recombination and thus may have a key role in the control of bacterial genetic diversity. Its function is as follows. Acts as a ribosome collision sensor, splitting the ribosome into its 2 subunits. Detects stalled/collided 70S ribosomes which it binds and splits by an ATP-hydrolysis driven conformational change. Acts upstream of the ribosome quality control system (RQC), a ribosome-associated complex that mediates the extraction of incompletely synthesized nascent chains from stalled ribosomes and their subsequent degradation. Probably generates substrates for RQC. This is Endonuclease MutS2 from Shouchella clausii (strain KSM-K16) (Alkalihalobacillus clausii).